The chain runs to 115 residues: Large ribosomal subunit protein bL19 (115 aa).

The protein belongs to the bacterial ribosomal protein bL19 family.

In terms of biological role, this protein is located at the 30S-50S ribosomal subunit interface and may play a role in the structure and function of the aminoacyl-tRNA binding site. This chain is Large ribosomal subunit protein bL19, found in Syntrophotalea carbinolica (strain DSM 2380 / NBRC 103641 / GraBd1) (Pelobacter carbinolicus).